A 1070-amino-acid chain; its full sequence is Carbamoyl phosphate synthase large chain (1070 aa).

The interval 1 to 399 (MPKREDIKKV…SLLKAFKSLD (399 aa)) is carboxyphosphate synthetic domain. ATP-binding residues include R129, R169, G175, G176, E208, V210, E215, G241, V242, H243, Q284, and E296. Residues 133-325 (KETMLRIGEK…IARVTAKIAI (193 aa)) form the ATP-grasp 1 domain. Mg(2+)-binding residues include Q284, E296, and N298. Mn(2+) contacts are provided by Q284, E296, and N298. An oligomerization domain region spans residues 400–540 (IDSQLGNKRW…YSTYEDTCET (141 aa)). The interval 541–931 (NPTDRKKILI…YKAELAADNL (391 aa)) is carbamoyl phosphate synthetic domain. One can recognise an ATP-grasp 2 domain in the interval 672-863 (YVLMQKFGIL…LAKIAARVIA (192 aa)). R708, D747, L749, E754, G779, V780, H781, S782, Q822, and E834 together coordinate ATP. Residues Q822, E834, and N836 each coordinate Mg(2+). Residues Q822, E834, and N836 each coordinate Mn(2+). Residues 930–1070 (NLLPLTGKVF…INEYHKEMGL (141 aa)) form the MGS-like domain. The interval 932-1070 (LPLTGKVFLS…INEYHKEMGL (139 aa)) is allosteric domain.

This sequence belongs to the CarB family. In terms of assembly, composed of two chains; the small (or glutamine) chain promotes the hydrolysis of glutamine to ammonia, which is used by the large (or ammonia) chain to synthesize carbamoyl phosphate. Tetramer of heterodimers (alpha,beta)4. Mg(2+) serves as cofactor. Mn(2+) is required as a cofactor.

The enzyme catalyses hydrogencarbonate + L-glutamine + 2 ATP + H2O = carbamoyl phosphate + L-glutamate + 2 ADP + phosphate + 2 H(+). It carries out the reaction hydrogencarbonate + NH4(+) + 2 ATP = carbamoyl phosphate + 2 ADP + phosphate + 2 H(+). It participates in amino-acid biosynthesis; L-arginine biosynthesis; carbamoyl phosphate from bicarbonate: step 1/1. It functions in the pathway pyrimidine metabolism; UMP biosynthesis via de novo pathway; (S)-dihydroorotate from bicarbonate: step 1/3. In terms of biological role, large subunit of the glutamine-dependent carbamoyl phosphate synthetase (CPSase). CPSase catalyzes the formation of carbamoyl phosphate from the ammonia moiety of glutamine, carbonate, and phosphate donated by ATP, constituting the first step of 2 biosynthetic pathways, one leading to arginine and/or urea and the other to pyrimidine nucleotides. The large subunit (synthetase) binds the substrates ammonia (free or transferred from glutamine from the small subunit), hydrogencarbonate and ATP and carries out an ATP-coupled ligase reaction, activating hydrogencarbonate by forming carboxy phosphate which reacts with ammonia to form carbamoyl phosphate. In Methanosarcina acetivorans (strain ATCC 35395 / DSM 2834 / JCM 12185 / C2A), this protein is Carbamoyl phosphate synthase large chain.